The chain runs to 556 residues: Zinc finger protein 18 (556 aa).

The SCAN box domain maps to 41–123 (RQLFRQFRYQ…TLVESLKGEP (83 aa)). The segment at 169–195 (QDLPLQNSSSATGELLSHGVKEESDME) is disordered. Positions 218-291 (ELGTAVLPPL…HLHGAEKMAR (74 aa)) constitute a KRAB domain. 5 consecutive C2H2-type zinc fingers follow at residues 415 to 437 (PTCRECGKTFYRNSQLVFHQRTH), 443 to 465 (FHCHICKKAFLRSSDFVKHQRTH), 471 to 493 (CKCDYCGKGFSDFSGLRHHEKIH), 499 to 521 (YKCPLCEKSFIQRSNFNRHQRVH), and 527 to 549 (YKCTHCGKQFSWSSSLDKHQRSH).

Belongs to the krueppel C2H2-type zinc-finger protein family.

It localises to the nucleus. Functionally, may be involved in transcriptional regulation. The sequence is that of Zinc finger protein 18 (Znf18) from Mus musculus (Mouse).